The following is a 403-amino-acid chain: Argininosuccinate synthase (403 aa).

10 to 18 (AYSGGLDTS) contributes to the ATP binding site. Position 87 (Tyr-87) interacts with L-citrulline. Residue Gly-117 participates in ATP binding. L-aspartate contacts are provided by Thr-119, Asn-123, and Asp-124. Asn-123 serves as a coordination point for L-citrulline. Arg-127, Ser-175, Glu-260, and Tyr-272 together coordinate L-citrulline.

Belongs to the argininosuccinate synthase family. Type 1 subfamily. In terms of assembly, homotetramer.

The protein localises to the cytoplasm. The catalysed reaction is L-citrulline + L-aspartate + ATP = 2-(N(omega)-L-arginino)succinate + AMP + diphosphate + H(+). It participates in amino-acid biosynthesis; L-arginine biosynthesis; L-arginine from L-ornithine and carbamoyl phosphate: step 2/3. This is Argininosuccinate synthase from Bacillus velezensis (strain DSM 23117 / BGSC 10A6 / LMG 26770 / FZB42) (Bacillus amyloliquefaciens subsp. plantarum).